Consider the following 279-residue polypeptide: Probable endonuclease 4 (279 aa).

Zn(2+) is bound by residues His67, His107, Glu144, Asp177, His180, His214, Asp227, His229, and Glu259.

This sequence belongs to the AP endonuclease 2 family. It depends on Zn(2+) as a cofactor.

It catalyses the reaction Endonucleolytic cleavage to 5'-phosphooligonucleotide end-products.. Functionally, endonuclease IV plays a role in DNA repair. It cleaves phosphodiester bonds at apurinic or apyrimidinic (AP) sites, generating a 3'-hydroxyl group and a 5'-terminal sugar phosphate. This Sulfurihydrogenibium sp. (strain YO3AOP1) protein is Probable endonuclease 4.